Consider the following 345-residue polypeptide: Leucine-rich repeat-containing protein 69 (345 aa).

LRR repeat units follow at residues 13-34 (KAKTLNLNGKRLQRVPVAVGCL), 36-58 (SLTELQLKNNLLCRLPVELSALC), 59-80 (RLRVLHLGNNHFEKVPEEIKYL), 82-103 (CLERLHLFGNRISEIPAAALDG), 106-127 (NLLFLNLNNNLLEHLPREIYKL), 129-151 (SLETLSINNNHMKAIPKELCFLQ), 152-173 (NLQELHLANNQLDSLPDELSYL), 175-196 (NLKELRLSRNQLTGLPEGICKL), 198-219 (KLKILDVAGNFIRSFPSAMHRV), and 220-241 (PLTELYCEENPLLEKQPVFARQ).

Belongs to the LRRC69 family.

The sequence is that of Leucine-rich repeat-containing protein 69 (lrrc69) from Xenopus laevis (African clawed frog).